We begin with the raw amino-acid sequence, 303 residues long: Formylglycine-generating enzyme (303 aa).

Asparagine 188, isoleucine 189, aspartate 202, tyrosine 204, asparagine 222, valine 223, glycine 225, and valine 227 together coordinate Ca(2+). Cu(+) contacts are provided by cysteine 269 and cysteine 274.

It belongs to the sulfatase-modifying factor family. Requires Cu(+) as cofactor.

The catalysed reaction is L-cysteinyl-[sulfatase] + 2 a thiol + O2 = an organic disulfide + 3-oxo-L-alanyl-[sulfatase] + hydrogen sulfide + H2O + H(+). It participates in protein modification; sulfatase oxidation. In terms of biological role, oxidase that catalyzes the conversion of cysteine to 3-oxoalanine on target proteins. 3-oxoalanine modification, which is also named formylglycine (fGly), occurs in the maturation of arylsulfatases and some alkaline phosphatases that use the hydrated form of 3-oxoalanine as a catalytic nucleophile. This Thermomonospora curvata (strain ATCC 19995 / DSM 43183 / JCM 3096 / KCTC 9072 / NBRC 15933 / NCIMB 10081 / Henssen B9) protein is Formylglycine-generating enzyme.